Here is a 228-residue protein sequence, read N- to C-terminus: uncharacterized protein (228 aa).

4 consecutive transmembrane segments (helical) span residues 37 to 54, 67 to 89, 104 to 126, and 138 to 160; these read WCMH…TLIV, VVSI…STGV, HIGI…TSRL, and VLHV…LVLY.

It is found in the cell membrane. This is an uncharacterized protein from Treponema pallidum (strain Nichols).